A 200-amino-acid chain; its full sequence is General odorant-binding protein 70 (200 aa).

The first 29 residues, 1–29, serve as a signal peptide directing secretion; the sequence is MRRQYSMWASTVAVIACGSALMLLHPVGA. Intrachain disulfides connect Cys105–Cys174 and Cys152–Cys183.

This sequence belongs to the PBP/GOBP family.

Its subcellular location is the secreted. Its function is as follows. Present in the aqueous fluid surrounding olfactory sensory dendrites and are thought to aid in the capture and transport of hydrophobic odorants into and through this fluid. The sequence is that of General odorant-binding protein 70 (Obp70) from Anopheles gambiae (African malaria mosquito).